A 492-amino-acid polypeptide reads, in one-letter code: Probable proline dehydrogenase, mitochondrial (492 aa).

The protein belongs to the proline oxidase family. It depends on FAD as a cofactor.

Its subcellular location is the mitochondrion. The enzyme catalyses L-proline + a quinone = (S)-1-pyrroline-5-carboxylate + a quinol + H(+). Converts proline to delta-1-pyrroline-5-carboxylate. The sequence is that of Probable proline dehydrogenase, mitochondrial from Schizosaccharomyces pombe (strain 972 / ATCC 24843) (Fission yeast).